A 215-amino-acid chain; its full sequence is MRAVIPYKNENAKSRLSPILSKKDREEFVELMLKDVIKALDDAEVVNIDILTTSAEGIPNDFNGNVTITEPGLNDSINEYLQNANEPILIIMADLPLVTGDHIRKIISFSEDVVIVPGKGGGTNILFIRHPNEFTVKYHDCSFISHCEITDELDKSMHIFDSFLASTDIDEPHDIVELMLHGKGQAKEYAEKRFGSETGKGRVKISHLSKLSGFV.

Belongs to the CofC family. Homodimer.

It carries out the reaction (2S)-2-phospholactate + GTP + H(+) = (2S)-lactyl-2-diphospho-5'-guanosine + diphosphate. It functions in the pathway cofactor biosynthesis; coenzyme F420 biosynthesis. In terms of biological role, guanylyltransferase that catalyzes the activation of (2S)-2-phospholactate (2-PL) as (2S)-lactyl-2-diphospho-5'-guanosine, via the condensation of 2-PL with GTP. It is involved in the biosynthesis of coenzyme F420, a hydride carrier cofactor. The chain is 2-phospho-L-lactate guanylyltransferase from Methanococcoides burtonii (strain DSM 6242 / NBRC 107633 / OCM 468 / ACE-M).